A 701-amino-acid polypeptide reads, in one-letter code: Elongation factor G 1 (701 aa).

The region spanning 8 to 290 is the tr-type G domain; sequence VRYRNIGICA…AVVEYLPAPT (283 aa). GTP is bound by residues 17–24, 88–92, and 142–145; these read AHVDAGKT, DTPGH, and NKMD.

The protein belongs to the TRAFAC class translation factor GTPase superfamily. Classic translation factor GTPase family. EF-G/EF-2 subfamily.

The protein resides in the cytoplasm. Functionally, catalyzes the GTP-dependent ribosomal translocation step during translation elongation. During this step, the ribosome changes from the pre-translocational (PRE) to the post-translocational (POST) state as the newly formed A-site-bound peptidyl-tRNA and P-site-bound deacylated tRNA move to the P and E sites, respectively. Catalyzes the coordinated movement of the two tRNA molecules, the mRNA and conformational changes in the ribosome. This chain is Elongation factor G 1, found in Saccharophagus degradans (strain 2-40 / ATCC 43961 / DSM 17024).